We begin with the raw amino-acid sequence, 149 residues long: Protein GR6 (149 aa).

In terms of tissue distribution, expressed in fetus (aged from 7 to 8 weeks). Weakly expressed in lymphocytes.

This chain is Protein GR6, found in Homo sapiens (Human).